We begin with the raw amino-acid sequence, 141 residues long: uncharacterized protein (141 aa).

The helical transmembrane segment at 114–134 (ILFTCYIQSFSLLISNFFIAI) threads the bilayer.

Its subcellular location is the membrane. This is an uncharacterized protein from Schizosaccharomyces pombe (strain 972 / ATCC 24843) (Fission yeast).